We begin with the raw amino-acid sequence, 463 residues long: Toxin CaTX-A (463 aa).

Positions methionine 1–alanine 18 are cleaved as a signal peptide.

This sequence belongs to the jellyfish toxin family. Type II subfamily. As to quaternary structure, oligomer. Contains disulfide bonds. As to expression, it is suggested that CaTX-B is synthesized in the tentacle, is modified (become CaTX-A) and then migrates to the nematocyst.

It is found in the secreted. Its subcellular location is the nematocyst. The protein resides in the target cell membrane. Has potent hemolytic activity. Is lethal to crayfish. Causes cutaneous inflammation in humans. May act as a pore-forming toxin, disrupting normal transmembrane ion concentration gradients in susceptible cells. The protein is Toxin CaTX-A of Carybdea alata (Hawaiian box jellyfish).